A 384-amino-acid polypeptide reads, in one-letter code: 8-amino-7-oxononanoate synthase (384 aa).

R21 is a binding site for substrate. 108 to 109 provides a ligand contact to pyridoxal 5'-phosphate; sequence GF. H133 is a binding site for substrate. Positions 179, 207, and 233 each coordinate pyridoxal 5'-phosphate. K236 bears the N6-(pyridoxal phosphate)lysine mark. A substrate-binding site is contributed by T352.

This sequence belongs to the class-II pyridoxal-phosphate-dependent aminotransferase family. BioF subfamily. Homodimer. Pyridoxal 5'-phosphate is required as a cofactor.

It carries out the reaction 6-carboxyhexanoyl-[ACP] + L-alanine + H(+) = (8S)-8-amino-7-oxononanoate + holo-[ACP] + CO2. Its pathway is cofactor biosynthesis; biotin biosynthesis. Catalyzes the decarboxylative condensation of pimeloyl-[acyl-carrier protein] and L-alanine to produce 8-amino-7-oxononanoate (AON), [acyl-carrier protein], and carbon dioxide. In Enterobacter sp. (strain 638), this protein is 8-amino-7-oxononanoate synthase.